The sequence spans 312 residues: Fibrinogen-like protein 1 (312 aa).

The N-terminal stretch at 1-22 (MAKMFSFILVTTALVMGRGSSA) is a signal peptide. Residues 39–60 (LLETRVKQQQVKISQLLHEKQV) adopt a coiled-coil conformation. Positions 74-306 (LGGKRQYADC…SVVMKIRPND (233 aa)) constitute a Fibrinogen C-terminal domain. Cystine bridges form between C83–C112 and C248–C261.

Homodimer. Interacts (via the Fibrinogen C-terminal domain) with LAG3 (via Ig-like domains 1 and 2).

It is found in the secreted. Functionally, immune suppressive molecule that inhibits antigen-specific T-cell activation by acting as a major ligand of LAG3. Responsible for LAG3 T-cell inhibitory function. Binds LAG3 independently from MHC class II (MHC-II). Secreted by, and promotes growth of, hepatocytes. The protein is Fibrinogen-like protein 1 (FGL1) of Bos taurus (Bovine).